A 1265-amino-acid chain; its full sequence is 1-phosphatidylinositol 4,5-bisphosphate phosphodiesterase gamma-2 (1265 aa).

Residues 20 to 131 (RALELGTVMT…WLSGLKILHQ (112 aa)) form the PH domain. One can recognise a PI-PLC X-box domain in the interval 312–456 (QDMNNPLSHY…LREKIIIKHK (145 aa)). Residues histidine 327 and histidine 372 contribute to the active site. SH2 domains lie at 532-635 (WFHK…TDPV) and 646-735 (WYYD…RYPV). Residues tyrosine 753 and tyrosine 759 each carry the phosphotyrosine; by BTK modification. The SH3 domain occupies 769–829 (MPQRTVKALY…PSNYVEDIST (61 aa)). Residues 930-1044 (LSDLVVYCKP…GYVLQPESMR (115 aa)) enclose the PI-PLC Y-box domain. The C2 domain maps to 1038–1169 (LQPESMRTEK…SGFRSVPLKN (132 aa)). Tyrosine 1197 bears the Phosphotyrosine; by BTK mark. A phosphotyrosine mark is found at tyrosine 1217 and tyrosine 1245.

Part of a complex composed of EEIG1, TNFRSF11A/RANK, PLCG2, GAB2, TEC and BTK; complex formation increases in the presence of TNFSF11/RANKL. Interacts (via SH2 domain) with CSF1R (tyrosine phosphorylated). Interacts constitutively with THEMIS2. It depends on Ca(2+) as a cofactor. In terms of processing, phosphorylated on tyrosine residues by CSF1R. Phosphorylated on tyrosine residues by BTK and SYK; upon ligand-induced activation of a variety of growth factor receptors and immune system receptors. Phosphorylation leads to increased phospholipase activity.

It is found in the membrane raft. The enzyme catalyses a 1,2-diacyl-sn-glycero-3-phospho-(1D-myo-inositol-4,5-bisphosphate) + H2O = 1D-myo-inositol 1,4,5-trisphosphate + a 1,2-diacyl-sn-glycerol + H(+). The production of the second messenger molecules diacylglycerol (DAG) and inositol 1,4,5-trisphosphate (IP3) is mediated by activated phosphatidylinositol-specific phospholipase C enzymes. It is a crucial enzyme in transmembrane signaling. The polypeptide is 1-phosphatidylinositol 4,5-bisphosphate phosphodiesterase gamma-2 (Homo sapiens (Human)).